We begin with the raw amino-acid sequence, 42 residues long: Photosystem I reaction center subunit IX (42 aa).

Residues 7 to 27 traverse the membrane as a helical segment; that stretch reads YLSAAPVLSTLWLGALAALLI.

The protein belongs to the PsaJ family.

The protein resides in the plastid membrane. Functionally, may help in the organization of the PsaE and PsaF subunits. This is Photosystem I reaction center subunit IX from Cuscuta reflexa (Southern Asian dodder).